A 338-amino-acid chain; its full sequence is Anthranilate phosphoribosyltransferase (338 aa).

Residues glycine 78, 81–82 (GD), serine 86, 88–91 (NIST), 106–114 (KHGNKSVTS), and serine 118 each bind 5-phospho-alpha-D-ribose 1-diphosphate. Glycine 78 is a binding site for anthranilate. Residue serine 90 coordinates Mg(2+). Residue asparagine 109 participates in anthranilate binding. Arginine 163 serves as a coordination point for anthranilate. 2 residues coordinate Mg(2+): aspartate 222 and glutamate 223.

It belongs to the anthranilate phosphoribosyltransferase family. As to quaternary structure, homodimer. The cofactor is Mg(2+).

The catalysed reaction is N-(5-phospho-beta-D-ribosyl)anthranilate + diphosphate = 5-phospho-alpha-D-ribose 1-diphosphate + anthranilate. Its pathway is amino-acid biosynthesis; L-tryptophan biosynthesis; L-tryptophan from chorismate: step 2/5. Catalyzes the transfer of the phosphoribosyl group of 5-phosphorylribose-1-pyrophosphate (PRPP) to anthranilate to yield N-(5'-phosphoribosyl)-anthranilate (PRA). This chain is Anthranilate phosphoribosyltransferase, found in Staphylococcus saprophyticus subsp. saprophyticus (strain ATCC 15305 / DSM 20229 / NCIMB 8711 / NCTC 7292 / S-41).